The primary structure comprises 197 residues: Holliday junction branch migration complex subunit RuvA (197 aa).

The domain I stretch occupies residues 1–64; it reads MIGRLSGKLI…EDAHLLYGFA (64 aa). The segment at 65–143 is domain II; that stretch reads SKEERQTFRQ…TGGNLTVPGG (79 aa). The flexible linker stretch occupies residues 143-147; that stretch reads GLPFA. A domain III region spans residues 148–197; sequence ATPDEKSDIVNALLALGYNEKEAAAATKSLPADVTVSEGVRLALKSLMKV.

It belongs to the RuvA family. As to quaternary structure, homotetramer. Forms an RuvA(8)-RuvB(12)-Holliday junction (HJ) complex. HJ DNA is sandwiched between 2 RuvA tetramers; dsDNA enters through RuvA and exits via RuvB. An RuvB hexamer assembles on each DNA strand where it exits the tetramer. Each RuvB hexamer is contacted by two RuvA subunits (via domain III) on 2 adjacent RuvB subunits; this complex drives branch migration. In the full resolvosome a probable DNA-RuvA(4)-RuvB(12)-RuvC(2) complex forms which resolves the HJ.

Its subcellular location is the cytoplasm. Functionally, the RuvA-RuvB-RuvC complex processes Holliday junction (HJ) DNA during genetic recombination and DNA repair, while the RuvA-RuvB complex plays an important role in the rescue of blocked DNA replication forks via replication fork reversal (RFR). RuvA specifically binds to HJ cruciform DNA, conferring on it an open structure. The RuvB hexamer acts as an ATP-dependent pump, pulling dsDNA into and through the RuvAB complex. HJ branch migration allows RuvC to scan DNA until it finds its consensus sequence, where it cleaves and resolves the cruciform DNA. The protein is Holliday junction branch migration complex subunit RuvA of Chromobacterium violaceum (strain ATCC 12472 / DSM 30191 / JCM 1249 / CCUG 213 / NBRC 12614 / NCIMB 9131 / NCTC 9757 / MK).